We begin with the raw amino-acid sequence, 237 residues long: Ribonuclease PH (237 aa).

Phosphate contacts are provided by residues Arg-86 and 124–126 (GTR).

Belongs to the RNase PH family. Homohexameric ring arranged as a trimer of dimers.

The enzyme catalyses tRNA(n+1) + phosphate = tRNA(n) + a ribonucleoside 5'-diphosphate. Functionally, phosphorolytic 3'-5' exoribonuclease that plays an important role in tRNA 3'-end maturation. Removes nucleotide residues following the 3'-CCA terminus of tRNAs; can also add nucleotides to the ends of RNA molecules by using nucleoside diphosphates as substrates, but this may not be physiologically important. Probably plays a role in initiation of 16S rRNA degradation (leading to ribosome degradation) during starvation. The protein is Ribonuclease PH of Xanthobacter autotrophicus (strain ATCC BAA-1158 / Py2).